Here is a 175-residue protein sequence, read N- to C-terminus: Pancreatic beta cell growth factor (175 aa).

A signal peptide spans 1 to 26 (MMLPMTLCRMSWMLLSCLMFLSWVEG). Positions 38 to 175 (ITCPQGSVAY…ELPYICKFKV (138 aa)) constitute a C-type lectin domain. 3 disulfide bridges follow: cysteine 40–cysteine 51, cysteine 68–cysteine 171, and cysteine 146–cysteine 163.

As to expression, expressed only in CW animals pancreas and to a lesser extent in duodenum. In pancreas it is found in acinar cells, but not in islets.

Its subcellular location is the secreted. Constituent of ilotropin, which is a partially purified preparation of cellophane wrapping (CW) pancreata. Capable of initiating duct cell proliferation, a prerequisite for islet neogenesis. This Mesocricetus auratus (Golden hamster) protein is Pancreatic beta cell growth factor (INGAP).